The chain runs to 581 residues: Leucine aminopeptidase 3, chloroplastic (581 aa).

A chloroplast-targeting transit peptide spans 1 to 50 (MAVTLVTSCASSSRFHFRSFSSSPSSLSSCFVRFQLLSRLRVSFAITPLY). Mn(2+) is bound by residues K350 and D355. Residue K362 is part of the active site. 3 residues coordinate Mn(2+): D375, D435, and E437. Residue R439 is part of the active site.

The protein belongs to the peptidase M17 family. In terms of assembly, homohexamer (dimer of homotrimers). It depends on Mn(2+) as a cofactor.

The protein localises to the plastid. It localises to the chloroplast. The catalysed reaction is Release of an N-terminal amino acid, Xaa-|-Yaa-, in which Xaa is preferably Leu, but may be other amino acids including Pro although not Arg or Lys, and Yaa may be Pro. Amino acid amides and methyl esters are also readily hydrolyzed, but rates on arylamides are exceedingly low.. It carries out the reaction Release of N-terminal proline from a peptide.. Its function is as follows. Presumably involved in the processing and regular turnover of intracellular proteins. Catalyzes the removal of unsubstituted N-terminal amino acids from various peptides. Possesses Cys-Gly dipeptidase activity. The chain is Leucine aminopeptidase 3, chloroplastic from Arabidopsis thaliana (Mouse-ear cress).